The primary structure comprises 2017 residues: Rootletin (2017 aa).

2 coiled-coil regions span residues 70–262 (ATEM…KVTN) and 318–444 (ERDL…LETE). A compositionally biased stretch (polar residues) spans 464–483 (SESGVQLSGSERTADASNGS). The tract at residues 464 to 518 (SESGVQLSGSERTADASNGSLRGLSGQRTPSPPRRSSPGRGRSPRRGPSPACSDS) is disordered. Residues 499-513 (SSPGRGRSPRRGPSP) show a composition bias toward low complexity. Coiled coils occupy residues 546 to 1058 (QDLL…LAES) and 1091 to 1438 (EMER…GLRS). Disordered regions lie at residues 1184–1226 (LRES…RSAV) and 1443–1575 (GLGL…GRLS). 7 positions are modified to phosphoserine: Ser1460, Ser1470, Ser1476, Ser1483, Ser1486, Ser1490, and Ser1496. Residues 1505–1704 (EAVRGALREF…DSEVKAGTLQ (200 aa)) adopt a coiled-coil conformation. Over residues 1510–1529 (ALREFLQELRSAQRERDELR) the composition is skewed to basic and acidic residues. Ser1575 and Ser1660 each carry phosphoserine. Residues 1962 to 2017 (RSAQAQTERTLEARERAHRQRVRGLEEQVSTLKGQLQQELRRSSAPFSPPSGPPEK) are disordered. Residues 1989–1999 (QVSTLKGQLQQ) are compositionally biased toward polar residues. Pro residues predominate over residues 2008-2017 (FSPPSGPPEK).

The protein belongs to the rootletin family. Homomer. Interacts with KLC3, NEK2 and the N-terminus of CEP250. Interacts with CEP44. Interacts with CCDC102B (via N-terminus). Phosphorylated by NEK2 which may regulate its association with centrosomes.

The protein localises to the cytoplasm. The protein resides in the cytoskeleton. It is found in the microtubule organizing center. It localises to the centrosome. Its subcellular location is the centriole. The protein localises to the cilium basal body. Its function is as follows. Major structural component of the ciliary rootlet, a cytoskeletal-like structure in ciliated cells which originates from the basal body at the proximal end of a cilium and extends proximally toward the cell nucleus. Furthermore, is required for the correct positioning of the cilium basal body relative to the cell nucleus, to allow for ciliogenesis. Contributes to centrosome cohesion before mitosis. This chain is Rootletin, found in Homo sapiens (Human).